The primary structure comprises 515 residues: MLSIPEFYQGKNVLITGATGFMGKVLLEKLLRSCPNTKAVYVLVRHKAGQKPRERVAEMMSCKLFDKLRDEQPDCAQKVIAISSELTQPELDMSKEDQDTLIDCIDIVFHCAATVRFNESLRDAMQLNVIATRQLLYLAQKMKKLEVFIHVSTAYANCNRKQIEEVVYPPPVDPKKLIESLEWMDDSLVNDITPKLIGDRPNTYTYTKALAEYVVQQEGSKLNIAIVRPSIVGASWKEPFPGWIDNFNGPSGLFIAAGKGILRTMRASNNAVADLIPVDVVVNTTLAAAWYSGVNRPKNMLVYNCTTGGTNPFHWGEVEYHVISTFKRNPLEQAFRRPNVNLTSNHLLYHYWIAVSHKAPALLYDVYLRITGRSPRMMKTITRLHRAMMLLEYFTSNSWVWNNENTNMLMSQLSPEDKKVFNFDVRQLHWAEYMENYCMGTKKYVLNEEMSGLPAARKHLNKLRNIRYGFNTILVVLIWRVFIARSQMARNIWYFVVSMCFKFLSYFRASSTMRY.

Residues 1–465 are Cytoplasmic-facing; the sequence is MLSIPEFYQG…ARKHLNKLRN (465 aa). A helical transmembrane segment spans residues 466 to 484; it reads IRYGFNTILVVLIWRVFIA. The Peroxisomal segment spans residues 485–515; it reads RSQMARNIWYFVVSMCFKFLSYFRASSTMRY.

The protein belongs to the fatty acyl-CoA reductase family.

Its subcellular location is the peroxisome membrane. It carries out the reaction a long-chain fatty acyl-CoA + 2 NADPH + 2 H(+) = a long-chain primary fatty alcohol + 2 NADP(+) + CoA. It catalyses the reaction hexadecanoyl-CoA + 2 NADPH + 2 H(+) = hexadecan-1-ol + 2 NADP(+) + CoA. The enzyme catalyses octadecanoyl-CoA + 2 NADPH + 2 H(+) = octadecan-1-ol + 2 NADP(+) + CoA. The catalysed reaction is (9Z)-octadecenoyl-CoA + 2 NADPH + 2 H(+) = (9Z)-octadecen-1-ol + 2 NADP(+) + CoA. It carries out the reaction (9Z,12Z)-octadecadienoyl-CoA + 2 NADPH + 2 H(+) = (9Z,12Z)-octadecadien-1-ol + 2 NADP(+) + CoA. It catalyses the reaction eicosanoyl-CoA + 2 NADPH + 2 H(+) = eicosan-1-ol + 2 NADP(+) + CoA. The enzyme catalyses 16-methylheptadecanoyl-CoA + 2 NADPH + 2 H(+) = 16-methylheptadecan-1-ol + 2 NADP(+) + CoA. The catalysed reaction is 18-methylnonadecanoyl-CoA + 2 NADPH + 2 H(+) = 18-methylnonadecan-1-ol + 2 NADP(+) + CoA. In terms of biological role, catalyzes the reduction of saturated and unsaturated C16 or C18 fatty acyl-CoA to fatty alcohols. It plays an essential role in the production of ether lipids/plasmalogens which synthesis requires fatty alcohols. In parallel, it is also required for wax monoesters production since fatty alcohols also constitute a substrate for their synthesis. In Xenopus laevis (African clawed frog), this protein is Fatty acyl-CoA reductase 1 (far1).